The sequence spans 230 residues: Metaxin-2 homolog (230 aa).

It belongs to the metaxin family. As to quaternary structure, associates with the mitochondrial contact site and cristae organizing system (MICOS) complex (also known as MINOS or MitOS complex).

It is found in the mitochondrion outer membrane. In terms of biological role, involved in transport of proteins into the mitochondrion. This is Metaxin-2 homolog (mtx-2) from Caenorhabditis elegans.